The sequence spans 286 residues: Polyamine aminopropyltransferase (286 aa).

Residues 5–238 (PLWHETLHDH…GIMTFAWASD (234 aa)) form the PABS domain. Gln-33 contacts S-methyl-5'-thioadenosine. 2 residues coordinate spermidine: His-64 and Asp-88. Residues Glu-108 and 140–141 (DG) each bind S-methyl-5'-thioadenosine. The active-site Proton acceptor is the Asp-158. Spermidine is bound at residue 158 to 161 (DCTD). Pro-165 contacts S-methyl-5'-thioadenosine.

This sequence belongs to the spermidine/spermine synthase family. As to quaternary structure, homodimer or homotetramer.

It localises to the cytoplasm. It carries out the reaction S-adenosyl 3-(methylsulfanyl)propylamine + putrescine = S-methyl-5'-thioadenosine + spermidine + H(+). The protein operates within amine and polyamine biosynthesis; spermidine biosynthesis; spermidine from putrescine: step 1/1. Catalyzes the irreversible transfer of a propylamine group from the amino donor S-adenosylmethioninamine (decarboxy-AdoMet) to putrescine (1,4-diaminobutane) to yield spermidine. The chain is Polyamine aminopropyltransferase from Klebsiella pneumoniae (strain 342).